A 199-amino-acid polypeptide reads, in one-letter code: Recombination protein RecR (199 aa).

Residues 56 to 71 (CQQCNNYTEQTLCALC) form a C4-type zinc finger. Residues 79 to 174 (TLLCVVESPA…NISQLAHGIP (96 aa)) enclose the Toprim domain.

The protein belongs to the RecR family.

In terms of biological role, may play a role in DNA repair. It seems to be involved in an RecBC-independent recombinational process of DNA repair. It may act with RecF and RecO. This chain is Recombination protein RecR, found in Legionella pneumophila subsp. pneumophila (strain Philadelphia 1 / ATCC 33152 / DSM 7513).